Reading from the N-terminus, the 295-residue chain is Trimeric intracellular cation channel type A (295 aa).

Topologically, residues 1-18 are lumenal; it reads MEVLDVLNLGEIAQYFSK. Residues 19-37 form a helical membrane-spanning segment; that stretch reads MAMFPVFDVAYYIVSILYL. Residues 38–51 lie on the Cytoplasmic side of the membrane; it reads KYEPGAVEVSRRSP. A helical transmembrane segment spans residues 52 to 75; the sequence is VASWLCAMLYCFGSYILADIMLGV. Residue Gly74 participates in Ca(2+) binding. Residues 76–86 are Lumenal-facing; that stretch reads CPIDYFHNNSH. The helical transmembrane segment at 87 to 106 threads the bilayer; sequence ILLASAVWYLIFFCPLNLFY. Topologically, residues 107-144 are cytoplasmic; that stretch reads KCVAFMPVKLVLVALKEVVRTRKIAAGVHHAHHAYHHG. The a 1,2-diacyl-sn-glycero-3-phospho-(1D-myo-inositol-4,5-bisphosphate) site is built by Lys122 and Arg126. A helical membrane pass occupies residues 145 to 162; the sequence is WLIMVITGYVKGSGVALM. Residues 163–182 lie on the Lumenal side of the membrane; it reads SNFEQLLRGVWKPETNEVLN. The helical transmembrane segment at 183–199 threads the bilayer; sequence MSFPTKASLYGAILFTL. Over 200–210 the chain is Cytoplasmic; that stretch reads QEAHVLPVSKS. Residues 211–227 form a helical membrane-spanning segment; that stretch reads TLICLFTLFMVSSKVFM. Residues 228-236 lie on the Lumenal side of the membrane; sequence TARHSHGSP. A helical transmembrane segment spans residues 237-255; sequence FALIESWVCHVLFGSPLGT. Over 256-295 the chain is Cytoplasmic; the sequence is EDAHDHHHAAPAAAPAPLSPAKNKEELSEGTRKRKSKKAE. Residues 259–295 are disordered; sequence HDHHHAAPAAAPAPLSPAKNKEELSEGTRKRKSKKAE. The span at 265 to 276 shows a compositional bias: low complexity; the sequence is APAAAPAPLSPA. Residues 277-286 show a composition bias toward basic and acidic residues; sequence KNKEELSEGT.

Belongs to the TMEM38 family. As to quaternary structure, homotrimer; conformation seems to be controled by binding to diacylglycerol (DAG).

It is found in the sarcoplasmic reticulum membrane. Its subcellular location is the nucleus membrane. It carries out the reaction K(+)(in) = K(+)(out). Its activity is regulated as follows. Channel activity is activated by a change of voltage within the sarcoplasmic reticulum lumen and blocked by luminal high Ca(2+) levels. Intracellular monovalent cation channel required for maintenance of rapid intracellular calcium release. Acts as a potassium counter-ion channel that functions in synchronization with calcium release from intracellular stores. Opened by a change of voltage within the sarcoplasmic reticulum lumen. The sequence is that of Trimeric intracellular cation channel type A (tmem38a) from Danio rerio (Zebrafish).